We begin with the raw amino-acid sequence, 97 residues long: Apolipoprotein C-II (97 aa).

Residues 1-22 (MGSRFFLALFLALLVLGNEVQG) form the signal peptide. The interval 63-71 (SVDEKLRDM) is lipid binding. A lipoprotein lipase cofactor region spans residues 75–97 (SSAAMTTYAGIFTDQLLTLLKGE).

Belongs to the apolipoprotein C2 family. In terms of processing, proapolipoprotein C-II is synthesized as a sialic acid containing glycoprotein which is subsequently desialylated prior to its proteolytic processing. Post-translationally, proapolipoprotein C-II, the major form found in plasma undergoes proteolytic cleavage of its N-terminal hexapeptide to generate the mature form apolipoprotein C-II, which occurs as the minor form in plasma.

It localises to the secreted. Component of chylomicrons, very low-density lipoproteins (VLDL), low-density lipoproteins (LDL), and high-density lipoproteins (HDL) in plasma. Plays an important role in lipoprotein metabolism as an activator of lipoprotein lipase. In Rattus norvegicus (Rat), this protein is Apolipoprotein C-II (Apoc2).